Reading from the N-terminus, the 220-residue chain is MTAIRNVKGILGTKLGMTQVWDENNKLVPVTVVQADSNVVTQLRDAAKDGYTAVQIGYGQIDPRKVTKPLAGHFEKAGVTPRRHVVELRTNDSDAYSLGQELSVEIFEAGQKVDVVGTSKGKGFAGVMKRHGFHGVGASHGAHKNHRKPGSIGGASTPSRVFKGLKMAGRMGGERHTTLNLTVHAIDAEKSLLLIKGAIPGARGRVVLVRTAVKTTVKGA.

The interval Gly-137 to Ser-159 is disordered.

The protein belongs to the universal ribosomal protein uL3 family. In terms of assembly, part of the 50S ribosomal subunit. Forms a cluster with proteins L14 and L19.

Functionally, one of the primary rRNA binding proteins, it binds directly near the 3'-end of the 23S rRNA, where it nucleates assembly of the 50S subunit. This Renibacterium salmoninarum (strain ATCC 33209 / DSM 20767 / JCM 11484 / NBRC 15589 / NCIMB 2235) protein is Large ribosomal subunit protein uL3.